Here is a 549-residue protein sequence, read N- to C-terminus: Arginine-containing cyclodipeptide synthase amaA (549 aa).

The Conserved DDXXE motif signature appears at 445–449 (DDRAE).

The protein belongs to the arginine-containing cyclodipeptide synthase family.

It catalyses the reaction L-prolyl-tRNA(Pro) + L-arginyl-tRNA(Arg) = cyclo(L-arginyl-L-prolyl) + tRNA(Pro) + tRNA(Arg) + 2 H(+). The protein operates within secondary metabolite biosynthesis. Its function is as follows. Arginine-containing cyclodipeptide synthase; part of the cluster that mediates the biosynthesis of a highly modified cyclo-arginine-proline dipeptide (cRP). Within the pathway, amaA acts as the scaffold-generating enzyme and is responsible for formation of the cyclo-Arg-Pro diketopiperazine (cRW) from L-arginyl-tRNA(Arg) + L-prolyl-tRNA(Pro). Additional enzymes from the cluster then further modify the cyclo-Arg-Pro diketopiperazine (cRW) scaffold. The protein is Arginine-containing cyclodipeptide synthase amaA of Apiospora montagnei (Sphaeria apiospora).